The sequence spans 659 residues: Protein phosphatase Slingshot homolog 3 (659 aa).

The segment covering 1-16 (MALVTVSRSPPGSGAS) has biased composition (polar residues). The interval 1-31 (MALVTVSRSPPGSGASTPVGPWDQAVQRRSR) is disordered. At Ala-2 the chain carries N-acetylalanine. Phosphoserine is present on residues Ser-9 and Ser-37. The interval 46–96 (LGLQDGGDNDDAAEASSEPTEKAPSEEELHGDQTDFGQGSQSPQKQEEQRQ) is disordered. The span at 64–78 (PTEKAPSEEELHGDQ) shows a compositional bias: basic and acidic residues. The span at 80-89 (DFGQGSQSPQ) shows a compositional bias: polar residues. 2 positions are modified to phosphoserine: Ser-85 and Ser-87. Residues 269-324 (EQMEQAIRAELWKVLDVSDLESVTSKEIRQALELRLGLPLQQYRDFIDNQMLLLVA) enclose the DEK-C domain. In terms of domain architecture, Tyrosine-protein phosphatase spans 328–469 (RASRIFPHLY…LQIYQGILTA (142 aa)). The active-site Phosphocysteine intermediate is the Cys-413. Disordered stretches follow at residues 482–534 (GVSP…RINL), 547–603 (SLEL…RQSV), and 617–638 (QAFQ…ISST). Residues 547–557 (SLELESTSETS) are compositionally biased toward low complexity.

This sequence belongs to the protein-tyrosine phosphatase family. Does not bind to, or colocalize with, filamentous actin.

It is found in the cytoplasm. Its subcellular location is the cytoskeleton. The protein localises to the nucleus. The catalysed reaction is O-phospho-L-tyrosyl-[protein] + H2O = L-tyrosyl-[protein] + phosphate. The enzyme catalyses O-phospho-L-seryl-[protein] + H2O = L-seryl-[protein] + phosphate. It carries out the reaction O-phospho-L-threonyl-[protein] + H2O = L-threonyl-[protein] + phosphate. In terms of biological role, protein phosphatase which may play a role in the regulation of actin filament dynamics. Can dephosphorylate and activate the actin binding/depolymerizing factor cofilin, which subsequently binds to actin filaments and stimulates their disassembly. The polypeptide is Protein phosphatase Slingshot homolog 3 (SSH3) (Homo sapiens (Human)).